The following is a 201-amino-acid chain: Sorting nexin-10 (201 aa).

The required for interaction with ATP6V1D stretch occupies residues 8 to 125 (EEFVSVWVRD…SLHLFLQSHL (118 aa)). In terms of domain architecture, PX spans 10–127 (FVSVWVRDPR…HLFLQSHLNS (118 aa)). Positions 53, 79, and 94 each coordinate a 1,2-diacyl-sn-glycero-3-phospho-(1D-myo-inositol-3-phosphate). Residues 155–201 (RFPEEEEEGKKDADVEYDSESSSSGLGHSSDDSSSHGCKTSPALQES) are disordered.

It belongs to the sorting nexin family. Interacts with ATP6V1D; may play a role in ciliogenesis. Expressed in femur, calvariae and teeth.

Its subcellular location is the cytoplasm. It is found in the endosome membrane. It localises to the cytoskeleton. The protein resides in the microtubule organizing center. The protein localises to the centrosome. Probable phosphoinositide-binding protein involved in protein sorting and membrane trafficking in endosomes. Plays a role in cilium biogenesis through regulation of the transport and the localization of proteins to the cilium. Required for the localization to the cilium of V-ATPase subunit ATP6V1D and ATP6V0D1, and RAB8A. Involved in osteoclast differentiation and therefore bone resorption. The chain is Sorting nexin-10 (Snx10) from Mus musculus (Mouse).